Reading from the N-terminus, the 248-residue chain is UPF0246 protein RPR_00055 (248 aa).

Belongs to the UPF0246 family.

This chain is UPF0246 protein RPR_00055, found in Rickettsia peacockii (strain Rustic).